Reading from the N-terminus, the 174-residue chain is Interferon gamma (174 aa).

Positions 1-23 (MHTTRCILALLLCLTQAMSGCYC) are cleaved as a signal peptide. Gln-24 carries the post-translational modification Pyrrolidone carboxylic acid. N-linked (GlcNAc...) asparagine glycans are attached at residues Asn-39 and Asn-106.

It belongs to the type II (or gamma) interferon family. Homodimer. Interacts with IFNGR1 (via extracellular domain); this interaction promotes IFNGR1 dimerization. In terms of tissue distribution, released primarily from activated T lymphocytes.

The protein localises to the secreted. Its function is as follows. Type II interferon produced by immune cells such as T-cells and NK cells that plays crucial roles in antimicrobial, antiviral, and antitumor responses by activating effector immune cells and enhancing antigen presentation. Primarily signals through the JAK-STAT pathway after interaction with its receptor IFNGR1 to affect gene regulation. Upon IFNG binding, IFNGR1 intracellular domain opens out to allow association of downstream signaling components JAK2, JAK1 and STAT1, leading to STAT1 activation, nuclear translocation and transcription of IFNG-regulated genes. Many of the induced genes are transcription factors such as IRF1 that are able to further drive regulation of a next wave of transcription. Plays a role in class I antigen presentation pathway by inducing a replacement of catalytic proteasome subunits with immunoproteasome subunits. In turn, increases the quantity, quality, and repertoire of peptides for class I MHC loading. Increases the efficiency of peptide generation also by inducing the expression of activator PA28 that associates with the proteasome and alters its proteolytic cleavage preference. Up-regulates as well MHC II complexes on the cell surface by promoting expression of several key molecules such as cathepsins B/CTSB, H/CTSH, and L/CTSL. Participates in the regulation of hematopoietic stem cells during development and under homeostatic conditions by affecting their development, quiescence, and differentiation. This Mesocricetus auratus (Golden hamster) protein is Interferon gamma (IFNG).